The primary structure comprises 174 residues: Mitochondrial holo-[acyl-carrier-protein] synthase (174 aa).

Belongs to the P-Pant transferase superfamily. AcpS family.

The protein resides in the mitochondrion. The catalysed reaction is apo-[ACP] + CoA = holo-[ACP] + adenosine 3',5'-bisphosphate + H(+). Transfers the 4'-phosphopantetheine moiety from coenzyme A to a Ser of mitochondrial acyl-carrier-protein. The sequence is that of Mitochondrial holo-[acyl-carrier-protein] synthase (PPT2) from Eremothecium gossypii (strain ATCC 10895 / CBS 109.51 / FGSC 9923 / NRRL Y-1056) (Yeast).